A 393-amino-acid chain; its full sequence is L-rhamnonate dehydratase (393 aa).

Residues histidine 22 and arginine 48 each coordinate substrate. Residues aspartate 214, glutamate 241, and glutamate 269 each coordinate Mg(2+). Histidine 319 functions as the Proton acceptor in the catalytic mechanism. Glutamate 339 is a binding site for substrate.

This sequence belongs to the mandelate racemase/muconate lactonizing enzyme family. RhamD subfamily. In terms of assembly, homooctamer; tetramer of dimers. Mg(2+) serves as cofactor.

It carries out the reaction L-rhamnonate = 2-dehydro-3-deoxy-L-rhamnonate + H2O. In terms of biological role, catalyzes the dehydration of L-rhamnonate to 2-keto-3-deoxy-L-rhamnonate (KDR). In Azorhizobium caulinodans (strain ATCC 43989 / DSM 5975 / JCM 20966 / LMG 6465 / NBRC 14845 / NCIMB 13405 / ORS 571), this protein is L-rhamnonate dehydratase.